The chain runs to 627 residues: Asparagine synthetase domain-containing protein 1 (627 aa).

C2 (for GATase activity) is an active-site residue. Residues 2–184 (CGICCSVSFS…ASGIFQIDLN (183 aa)) enclose the Glutamine amidotransferase type-2 domain. Residues 308–597 (ASKEVLKTCS…GLPASALLPK (290 aa)) form the Asparagine synthetase domain. The interval 373–404 (QQNHHEIPSEESSQSPAADEGPGEAEVPDRVT) is disordered.

The polypeptide is Asparagine synthetase domain-containing protein 1 (Asnsd1) (Mus musculus (Mouse)).